The following is a 119-amino-acid chain: uncharacterized protein (119 aa).

Helical transmembrane passes span 28-48, 55-75, and 80-100; these read AWTT…HLVF, IEVV…NLAI, and PIGK…GIIV.

The protein to M.tuberculosis Rv1342c.

The protein localises to the cell membrane. This is an uncharacterized protein from Mycobacterium leprae (strain TN).